The primary structure comprises 191 residues: Calcium-activated potassium channel subunit beta-1 (191 aa).

The Cytoplasmic segment spans residues 2 to 18 (GKKLVMAQRRGETRALC). The chain crosses the membrane as a helical span at residues 19–39 (LGVAMVVGAVITYYILGTTVL). Residues 40 to 157 (PLYQKSVWTQ…YRRLYGPQSL (118 aa)) lie on the Extracellular side of the membrane. N-linked (GlcNAc...) asparagine glycosylation is found at Asn80 and Asn142. A helical membrane pass occupies residues 158 to 178 (LFSLFWPTFLLTGGLLIIVMV). At 179–191 (KINQSLSILAAQR) the chain is on the cytoplasmic side.

It belongs to the KCNMB (TC 8.A.14.1) family. KCNMB1 subfamily. Interacts with KCNMA1 tetramer. There are probably 4 molecules of KCMNB1 per KCNMA1 tetramer. Post-translationally, N-glycosylated.

The protein localises to the membrane. Functionally, regulatory subunit of the calcium activated potassium KCNMA1 (maxiK) channel. Modulates the calcium sensitivity and gating kinetics of KCNMA1, thereby contributing to KCNMA1 channel diversity. Increases the apparent Ca(2+)/voltage sensitivity of the KCNMA1 channel. It also modifies KCNMA1 channel kinetics and alters its pharmacological properties. It slows down the activation and the deactivation kinetics of the channel. Acts as a negative regulator of smooth muscle contraction by enhancing the calcium sensitivity to KCNMA1. Its presence is also a requirement for internal binding of the KCNMA1 channel opener dehydrosoyasaponin I (DHS-1) triterpene glycoside and for external binding of the agonist hormone 17-beta-estradiol (E2). Increases the binding activity of charybdotoxin (CTX) toxin to KCNMA1 peptide blocker by increasing the CTX association rate and decreasing the dissociation rate. This is Calcium-activated potassium channel subunit beta-1 (KCNMB1) from Bos taurus (Bovine).